Consider the following 79-residue polypeptide: MVDAITVLTAICITVLMLLMVISGTAMIVKELNPNDIFTMQSLKFNRTVTIFKYIGLFIYIPGTIILYATYVKSLLMKN.

The Intravirion portion of the chain corresponds to 2-8 (VDAITVL). Residues 9–29 (TAICITVLMLLMVISGTAMIV) form a helical membrane-spanning segment. Topologically, residues 30–47 (KELNPNDIFTMQSLKFNR) are virion surface. The chain crosses the membrane as a helical span at residues 48 to 68 (TVTIFKYIGLFIYIPGTIILY). At 69–79 (ATYVKSLLMKN) the chain is on the intravirion side.

This sequence belongs to the orthopoxvirus OPG081 family.

It is found in the virion membrane. Envelope protein. The protein is Protein OPG081 (OPG081) of Cynomys gunnisoni (Gunnison's prairie dog).